The sequence spans 333 residues: Ketoreductase sphI (333 aa).

An NADP(+)-binding site is contributed by Tyr-167.

It belongs to the NAD(P)-dependent epimerase/dehydratase family. Dihydroflavonol-4-reductase subfamily.

Functionally, ketoreductase; part of the gene cluster that mediates the biosynthesis of sphingofungins, bioactive molecules acting as sphingolipid inhibitors via inhibiting serine palmitoyl transferase (SPT). Does not seem to be involved in any biosynthetic process leading to the production of sphingofungins, but might be connected to a regulation or resistance mechanism. The sequence is that of Ketoreductase sphI from Aspergillus fumigatus (strain CBS 144.89 / FGSC A1163 / CEA10) (Neosartorya fumigata).